The sequence spans 316 residues: GTP cyclohydrolase FolE2 2 (316 aa).

It belongs to the GTP cyclohydrolase IV family.

It carries out the reaction GTP + H2O = 7,8-dihydroneopterin 3'-triphosphate + formate + H(+). It functions in the pathway cofactor biosynthesis; 7,8-dihydroneopterin triphosphate biosynthesis; 7,8-dihydroneopterin triphosphate from GTP: step 1/1. In terms of biological role, converts GTP to 7,8-dihydroneopterin triphosphate. The chain is GTP cyclohydrolase FolE2 2 from Burkholderia orbicola (strain MC0-3).